The chain runs to 458 residues: Mitochondrial-processing peptidase subunit beta (458 aa).

The N-terminal 41 residues, M1–V41, are a transit peptide targeting the mitochondrion. H73 is a Zn(2+) binding site. The active-site Proton acceptor is the E76. Zn(2+)-binding residues include H77 and E153.

Belongs to the peptidase M16 family. Heterodimer of mppa-1 (alpha) and mppb-1 (beta) subunits, forming the mitochondrial processing protease (MPP) in which mppa-1 is involved in substrate recognition and binding and mppb-1 is the catalytic subunit. Zn(2+) is required as a cofactor.

The protein resides in the mitochondrion matrix. It catalyses the reaction Release of N-terminal transit peptides from precursor proteins imported into the mitochondrion, typically with Arg in position P2.. Binding to mppa-1 is required for catalytic activity. Inhibited by metal chelator ethylenediaminetetraacetic acid (EDTA). Functionally, catalytic subunit of the essential mitochondrial processing protease (MPP), which cleaves the mitochondrial sequence off newly imported precursors proteins. Preferentially, cleaves after an arginine at position P2. The chain is Mitochondrial-processing peptidase subunit beta from Caenorhabditis elegans.